A 249-amino-acid polypeptide reads, in one-letter code: MTHQPQQSPQFFLTAPSPCPYLEGQQERKVFTHLVGDKANEINDLLTQGGFRRSQNIAYRPACEVCRACISVRILAGEFEMTRNMRRVWSQNRDLIGRVHKAQPSTEQYALFRDYLDARHRSGGMSDMTVLDYAMMIEDTHVNTQIIEYRRRGPDSFMSAKGDGELIAVALTDVMADGLSMVYSFFLPHMQERSLGTYMILDHIERARAAGLPHVYLGYWVEGSRKMQYKIRFTPQEHLGPRGWQRFEG.

It belongs to the R-transferase family. Bpt subfamily.

It localises to the cytoplasm. The enzyme catalyses N-terminal L-glutamyl-[protein] + L-leucyl-tRNA(Leu) = N-terminal L-leucyl-L-glutamyl-[protein] + tRNA(Leu) + H(+). It carries out the reaction N-terminal L-aspartyl-[protein] + L-leucyl-tRNA(Leu) = N-terminal L-leucyl-L-aspartyl-[protein] + tRNA(Leu) + H(+). Functionally, functions in the N-end rule pathway of protein degradation where it conjugates Leu from its aminoacyl-tRNA to the N-termini of proteins containing an N-terminal aspartate or glutamate. The polypeptide is Aspartate/glutamate leucyltransferase (Brucella abortus (strain 2308)).